The chain runs to 126 residues: Fatty acid-binding protein, liver (126 aa).

Residues 54 to 56 (TPN), 99 to 101 (HEQ), and Arg-121 contribute to the cholate site.

It belongs to the calycin superfamily. Fatty-acid binding protein (FABP) family.

It is found in the cytoplasm. Functionally, FABPs are thought to play a role in the intracellular transport of long-chain fatty acids and their acyl-CoA esters. This Anolis pulchellus (Common grass anole) protein is Fatty acid-binding protein, liver.